The primary structure comprises 394 residues: 4-hydroxybenzoate 3-monooxygenase (NAD(P)H) (394 aa).

FAD contacts are provided by residues E32, 42–47 (TIRAGV), and Q102. Residues Y203, 214-216 (STR), and Y224 each bind substrate. D288 serves as a coordination point for FAD. P295 is a substrate binding site. 301–302 (LN) serves as a coordination point for FAD.

This sequence belongs to the aromatic-ring hydroxylase family. Requires FAD as cofactor.

The enzyme catalyses 4-hydroxybenzoate + NADH + O2 + H(+) = 3,4-dihydroxybenzoate + NAD(+) + H2O. It catalyses the reaction 4-hydroxybenzoate + NADPH + O2 + H(+) = 3,4-dihydroxybenzoate + NADP(+) + H2O. Functionally, involved in the degradation of 4-hydroxybenzoate (4HB) via the protocatechuate (PCA) 2,3-cleavage pathway. Catalyzes the conversion of 4HB into 2-hydroxypenta-2,4-dienoate (HPD). It is highly specific for 4-hydroxybenzoate, and is able to utilize both NADH and NADPH as electron donors at approximately equal rates. In Paenibacillus sp, this protein is 4-hydroxybenzoate 3-monooxygenase (NAD(P)H) (praI).